We begin with the raw amino-acid sequence, 241 residues long: MAPK phosphothreonine lyase (241 aa).

His106 (proton donor) is an active-site residue. Lys136 (proton acceptor) is an active-site residue.

This sequence belongs to the phosphothreonine lyase family.

Its subcellular location is the secreted. Functionally, secreted effector that irreversibly inactivates host MAP kinases by catalyzing the dephosphorylation of the phosphothreonine residue in the pT-X-pY motif present in MAPKs, via a beta-elimination reaction leading to a dehydrobutyrine residue. This is MAPK phosphothreonine lyase (spvC) from Salmonella choleraesuis (strain SC-B67).